The chain runs to 286 residues: NADPH-dependent 7-cyano-7-deazaguanine reductase (286 aa).

Position 92 to 94 (92 to 94 (IES)) interacts with substrate. 94–95 (SK) is an NADPH binding site. C194 (thioimide intermediate) is an active-site residue. D201 (proton donor) is an active-site residue. 233-234 (HE) is a substrate binding site. 262 to 263 (RG) is an NADPH binding site.

This sequence belongs to the GTP cyclohydrolase I family. QueF type 2 subfamily. Homodimer.

It localises to the cytoplasm. It catalyses the reaction 7-aminomethyl-7-carbaguanine + 2 NADP(+) = 7-cyano-7-deazaguanine + 2 NADPH + 3 H(+). It functions in the pathway tRNA modification; tRNA-queuosine biosynthesis. Catalyzes the NADPH-dependent reduction of 7-cyano-7-deazaguanine (preQ0) to 7-aminomethyl-7-deazaguanine (preQ1). In Shewanella sp. (strain MR-7), this protein is NADPH-dependent 7-cyano-7-deazaguanine reductase.